Consider the following 359-residue polypeptide: Biotin synthase (359 aa).

Positions 1 to 22 (MQSTPLNFVPNAAKAPVTPGQA) are disordered. Positions 58–285 (NAVQLSTLLS…KAMVRLSAGR (228 aa)) constitute a Radical SAM core domain. Positions 73, 77, and 80 each coordinate [4Fe-4S] cluster. [2Fe-2S] cluster-binding residues include Cys117, Cys148, Cys208, and Arg280.

This sequence belongs to the radical SAM superfamily. Biotin synthase family. As to quaternary structure, homodimer. [4Fe-4S] cluster is required as a cofactor. It depends on [2Fe-2S] cluster as a cofactor.

The catalysed reaction is (4R,5S)-dethiobiotin + (sulfur carrier)-SH + 2 reduced [2Fe-2S]-[ferredoxin] + 2 S-adenosyl-L-methionine = (sulfur carrier)-H + biotin + 2 5'-deoxyadenosine + 2 L-methionine + 2 oxidized [2Fe-2S]-[ferredoxin]. The protein operates within cofactor biosynthesis; biotin biosynthesis; biotin from 7,8-diaminononanoate: step 2/2. Its function is as follows. Catalyzes the conversion of dethiobiotin (DTB) to biotin by the insertion of a sulfur atom into dethiobiotin via a radical-based mechanism. The sequence is that of Biotin synthase from Ralstonia pickettii (strain 12J).